Consider the following 221-residue polypeptide: SIN3-HDAC complex-associated factor (221 aa).

The span at 112–121 shows a compositional bias: basic and acidic residues; that stretch reads QKEFKRHNSD. 2 disordered regions span residues 112 to 152 and 201 to 221; these read QKEF…MASG and AAAEKPEEQGPEPLPISTQEW. Over residues 124–135 the composition is skewed to low complexity; that stretch reads STTSSASPAQSP. Residues 136 to 152 show a composition bias toward polar residues; it reads CYSNQSDDGSDTEMASG.

Belongs to the SINHCAF family. As to quaternary structure, interacts with the Sin3/HDAC corepressor complex at least composed of BRMS1, BRMS1L, ING2, SAP30, SAP30L and HDAC1. Found in a complex composed of at least SINHCAF, SIN3A, HDAC1, SAP30, RBBP4, OGT and TET1. Interacts with SIN3A and OGT.

The protein resides in the nucleus. Subunit of the Sin3 deacetylase complex (Sin3/HDAC), this subunit is important for the repression of genes encoding components of the TGF-beta signaling pathway. Core component of a SIN3A complex (composed of at least SINHCAF, SIN3A, HDAC1, SAP30, RBBP4, OGT and TET1) present in embryonic stem (ES) cells. Promotes the stability of SIN3A and its presence on chromatin and is essential for maintaining the potential of ES cells to proliferate rapidly, while ensuring a short G1-phase of the cell cycle, thereby preventing premature lineage priming. This Homo sapiens (Human) protein is SIN3-HDAC complex-associated factor.